The primary structure comprises 217 residues: Holliday junction branch migration complex subunit RuvA (217 aa).

Positions 1 to 64 (MIGKLTGILD…EDAIRLFGFE (64 aa)) are domain I. The domain II stretch occupies residues 65–145 (TKVEQDWFCL…NAPHQSMPHF (81 aa)). The segment at 146 to 160 (VSYSSETSSQAGTQH) is flexible linker. The interval 161-217 (TGHQHSMDALAALTKLGFERDQATHALQEAIKAFEGETPSSALLIRHSLKLLSSHLK) is domain III.

This sequence belongs to the RuvA family. As to quaternary structure, homotetramer. Forms an RuvA(8)-RuvB(12)-Holliday junction (HJ) complex. HJ DNA is sandwiched between 2 RuvA tetramers; dsDNA enters through RuvA and exits via RuvB. An RuvB hexamer assembles on each DNA strand where it exits the tetramer. Each RuvB hexamer is contacted by two RuvA subunits (via domain III) on 2 adjacent RuvB subunits; this complex drives branch migration. In the full resolvosome a probable DNA-RuvA(4)-RuvB(12)-RuvC(2) complex forms which resolves the HJ.

The protein localises to the cytoplasm. In terms of biological role, the RuvA-RuvB-RuvC complex processes Holliday junction (HJ) DNA during genetic recombination and DNA repair, while the RuvA-RuvB complex plays an important role in the rescue of blocked DNA replication forks via replication fork reversal (RFR). RuvA specifically binds to HJ cruciform DNA, conferring on it an open structure. The RuvB hexamer acts as an ATP-dependent pump, pulling dsDNA into and through the RuvAB complex. HJ branch migration allows RuvC to scan DNA until it finds its consensus sequence, where it cleaves and resolves the cruciform DNA. The protein is Holliday junction branch migration complex subunit RuvA of Bartonella bacilliformis (strain ATCC 35685 / KC583 / Herrer 020/F12,63).